The chain runs to 377 residues: Modification methylase CviBIII (377 aa).

It belongs to the N(4)/N(6)-methyltransferase family.

The enzyme catalyses a 2'-deoxyadenosine in DNA + S-adenosyl-L-methionine = an N(6)-methyl-2'-deoxyadenosine in DNA + S-adenosyl-L-homocysteine + H(+). Its function is as follows. A gamma subtype methylase that recognizes the double-stranded sequence 5'-TCGA-3' and methylates A-4 on both strands. The protein is Modification methylase CviBIII (CVIBIIIM) of Paramecium bursaria Chlorella virus NC1A (PBCV-NC1A).